The sequence spans 574 residues: Myo-inositol transporter FST1 (574 aa).

Over 1–76 (MGKSRQNSTT…VQFANPKHFT (76 aa)) the chain is Cytoplasmic. A helical transmembrane segment spans residues 77–97 (WLLVAFASMGGLLSGLDQSLI). The Extracellular portion of the chain corresponds to 98-115 (SGANLFLPDDLGLTEHEN). The helical transmembrane segment at 116-136 (SLVNSGMPLGAVGGALLLSPA) threads the bilayer. Residues 137 to 143 (NEYFGRK) are Cytoplasmic-facing. A helical membrane pass occupies residues 144-164 (GAIIISIILYTIGAALEAGSI). The Extracellular portion of the chain corresponds to 165 to 173 (NFGMIVSSR). Residues 174 to 194 (VILGLGVGLEGGTVPVYVAET) traverse the membrane as a helical segment. The Cytoplasmic segment spans residues 195-205 (VERRIRGNLVS). A helical membrane pass occupies residues 206 to 226 (LYQFNIALGEVLGYAVGAIFL). The Extracellular portion of the chain corresponds to 227–233 (NVPGNWR). A helical membrane pass occupies residues 234–254 (YILGSSLLFSTIMFFGMLFLP). Residues 255–330 (ESPRFLIHQK…RARRALVYAN (76 aa)) lie on the Cytoplasmic side of the membrane. A helical membrane pass occupies residues 331–351 (IMILLGQLTGVNAIMYYMSVL). Over 352 to 363 (MNQIGFDKKESN) the chain is Extracellular. Residues 364-384 (YMSLVGGGSLLLGTIPAIFLM) form a helical membrane-spanning segment. Residues 385 to 390 (ERFGRR) lie on the Cytoplasmic side of the membrane. Residues 391–411 (FWAITMLPGFFIGLVLIGVSY) form a helical membrane-spanning segment. Residues 412 to 426 (QFDVETQLQTVEGLY) lie on the Extracellular side of the membrane. The helical transmembrane segment at 427–447 (LSGLIIYMGFFGSYACLTWVV) threads the bilayer. The Cytoplasmic segment spans residues 448–465 (PSEVYPTYLRSYGMTTSD). A helical transmembrane segment spans residues 466 to 486 (ALLFLASFIVTYNFTAMQNAM). Residues 487 to 490 (GKTG) lie on the Extracellular side of the membrane. The chain crosses the membrane as a helical span at residues 491–511 (LALGFYGGIAFIGEIYQIFFM). Residues 512–574 (PETKNKTLEE…PKDQVQVSHA (63 aa)) lie on the Cytoplasmic side of the membrane.

The protein belongs to the major facilitator superfamily. Sugar transporter (TC 2.A.1.1) family.

The protein localises to the cell membrane. It catalyses the reaction myo-inositol(out) + H(+)(out) = myo-inositol(in) + H(+)(in). Its function is as follows. Transporter for myo-inositol. Also appears to transport the polyketide mycotoxin fumonisin B1 (FB1). Does not appear to transport hexose sugars. This is Myo-inositol transporter FST1 from Gibberella moniliformis (strain M3125 / FGSC 7600) (Maize ear and stalk rot fungus).